Here is a 483-residue protein sequence, read N- to C-terminus: MLIFDHSRPGRTAAAQLPATGGDLGDLPAELRRKDAPALPEVSELDVVRHYTRLSQKNFSIDTQFYPLGSCTMKYNPRACNSLAMLPQFLARHPASPDETGQGFLASMFELQEMLKDVTGMAGVSMAPMAGAHGEFAGVAMIRAYHDAKGDAARREIIVPDAAHGTNPATATMCGYTVKEIPTDATGAVDLAALKAAVGPQTAGLMLTNPSTLGVFEKTIAEIQKIVHDAGGLLYYDGANLNAILGKVRPGDMGFDVIHMNLHKTFSTPHGGGGPGAGPVGVSGRLLPFMPIPLVLNDNGFYRLATEADLPQSIGRMSANMGNAGVLMRAYVYARLLGREGMHRVAEYATLNANYLMAKLREAGFDLAYPTRRASHEFIVTLKKLKDATGVSAMDFAKRLLDYGYHAPTTYFPLLVPECLLIEPTETESRETLDGFVDAMKTIKHEAETNPDLVKGAPYTLPVRRLDDVKAARELDLAYKPAA.

The interval 1–24 (MLIFDHSRPGRTAAAQLPATGGDL) is disordered. The residue at position 264 (K264) is an N6-(pyridoxal phosphate)lysine.

The protein belongs to the GcvP family. C-terminal subunit subfamily. The glycine cleavage system is composed of four proteins: P, T, L and H. In this organism, the P 'protein' is a heterodimer of two subunits. The cofactor is pyridoxal 5'-phosphate.

It carries out the reaction N(6)-[(R)-lipoyl]-L-lysyl-[glycine-cleavage complex H protein] + glycine + H(+) = N(6)-[(R)-S(8)-aminomethyldihydrolipoyl]-L-lysyl-[glycine-cleavage complex H protein] + CO2. Its function is as follows. The glycine cleavage system catalyzes the degradation of glycine. The P protein binds the alpha-amino group of glycine through its pyridoxal phosphate cofactor; CO(2) is released and the remaining methylamine moiety is then transferred to the lipoamide cofactor of the H protein. The sequence is that of Probable glycine dehydrogenase (decarboxylating) subunit 2 from Thiobacillus denitrificans (strain ATCC 25259 / T1).